Consider the following 270-residue polypeptide: Tetraspanin-17 (270 aa).

The Cytoplasmic segment spans residues 1–19 (MPGKHQQFQDPEVGCCGKY). The chain crosses the membrane as a helical span at residues 20–40 (FLFGFNIVFWVLGALFLAIGL). The Extracellular segment spans residues 41–63 (WAWGEKGVLSNISALTDLGGLDP). N-linked (GlcNAc...) asparagine glycosylation occurs at asparagine 51. The chain crosses the membrane as a helical span at residues 64–84 (VWLFVVVGGVMSVLGFAGCIG). The Cytoplasmic portion of the chain corresponds to 85 to 94 (ALRENTFLLK). Residues 95–115 (FFSVFLGLIFFLELAAGILAF) traverse the membrane as a helical segment. Residues 116–234 (VFKDWIRDQL…GQFEKWLQDN (119 aa)) are Extracellular-facing. Cystine bridges form between cysteine 155/cysteine 223, cysteine 156/cysteine 188, cysteine 172/cysteine 182, and cysteine 189/cysteine 202. N-linked (GlcNAc...) asparagine glycosylation is present at asparagine 171. The helical transmembrane segment at 235 to 255 (LIVVAGVLVGIALLQIFGLCL) threads the bilayer. Residues 256-270 (AQNLVSDIKAVKANW) lie on the Cytoplasmic side of the membrane.

Belongs to the tetraspanin (TM4SF) family. Interacts with ADAM10; the interaction influences ADAM10 substrate specificity, endocytosis and turnover.

It is found in the cell membrane. Part of TspanC8 subgroup, composed of 6 members that interact with the transmembrane metalloprotease ADAM10. This interaction is required for ADAM10 exit from the endoplasmic reticulum and for enzymatic maturation and trafficking to the cell surface as well as substrate specificity. Different TspanC8/ADAM10 complexes have distinct substrates. Seems to regulate VE-cadherin expression in endothelial cells probably through interaction with ADAM10, promoting leukocyte transmigration. This chain is Tetraspanin-17 (Tspan17), found in Mus musculus (Mouse).